Consider the following 229-residue polypeptide: Uracil-DNA glycosylase (229 aa).

The active-site Proton acceptor is the aspartate 64.

This sequence belongs to the uracil-DNA glycosylase (UDG) superfamily. UNG family.

The protein resides in the cytoplasm. It carries out the reaction Hydrolyzes single-stranded DNA or mismatched double-stranded DNA and polynucleotides, releasing free uracil.. Functionally, excises uracil residues from the DNA which can arise as a result of misincorporation of dUMP residues by DNA polymerase or due to deamination of cytosine. The sequence is that of Uracil-DNA glycosylase from Klebsiella pneumoniae subsp. pneumoniae (strain ATCC 700721 / MGH 78578).